The following is a 74-amino-acid chain: U-actitoxin-Bgr3a (74 aa).

The first 21 residues, 1 to 21, serve as a signal peptide directing secretion; sequence MSAQRFLFLLVVTSLIAASLA. The propeptide occupies 22-29; that stretch reads APKDVQLT. Cystine bridges form between cysteine 35-cysteine 68, cysteine 37-cysteine 61, and cysteine 51-cysteine 69.

It belongs to the sea anemone type 3 (BDS) potassium channel toxin family.

Its subcellular location is the secreted. It localises to the nematocyst. In terms of biological role, potently and selectively inhibits voltage-gated potassium channels Kv11/KCNH/ERG. Acts as a gating-modifier toxin that shifts the voltage-dependence of ERG activation in the positive direction and suppresses its current amplitudes elicited by strong depolarizing pulses that maximally activate the channels. This Bunodosoma granuliferum (Red warty sea anemone) protein is U-actitoxin-Bgr3a.